Here is a 191-residue protein sequence, read N- to C-terminus: CASP-like protein 4C3 (191 aa).

Topologically, residues 1–29 (METGDSAVKSSQDVHYYGKSTAQKHRRSN) are cytoplasmic. Residues 30–50 (GIILIFRALTFSFSLTSVIVM) traverse the membrane as a helical segment. The Extracellular portion of the chain corresponds to 51 to 72 (GTNRHRIDAQSRVAWYDFDPFR). The chain crosses the membrane as a helical span at residues 73–93 (YVLAVNAIICIYSFVEIWLAV). Residues 94–116 (YTYLKDTLFLPETFQVWFDYGHD) are Cytoplasmic-facing. Residues 117–137 (QGFAYLLFSANSAGIAMAQLL) traverse the membrane as a helical segment. At 138-162 (QSGNSLIHGAYRCSDAGVFCTQARA) the chain is on the extracellular side. The helical transmembrane segment at 163–183 (SIGLGFGAFLFLALSSLLTGL) threads the bilayer. The Cytoplasmic segment spans residues 184-191 (RVARWYFS).

It belongs to the Casparian strip membrane proteins (CASP) family. As to quaternary structure, homodimer and heterodimers.

The protein resides in the cell membrane. This Physcomitrium patens (Spreading-leaved earth moss) protein is CASP-like protein 4C3.